The primary structure comprises 548 residues: Membrane protein insertase YidC (548 aa).

Residues 6–26 form a helical membrane-spanning segment; the sequence is NLLVIALLFVSFMIWQAWEQD. A disordered region spans residues 28-56; the sequence is NPQPQTQQTTQTTTTAAGSAADQGVPASG. Over residues 29–42 the composition is skewed to low complexity; it reads PQPQTQQTTQTTTT. Transmembrane regions (helical) follow at residues 350 to 370, 424 to 444, 458 to 478, and 499 to 519; these read FVGN…GIMY, FPLI…MGSI, LSAQ…MFFI, and PVIF…YYIV.

Belongs to the OXA1/ALB3/YidC family. Type 1 subfamily. Interacts with the Sec translocase complex via SecD. Specifically interacts with transmembrane segments of nascent integral membrane proteins during membrane integration.

It localises to the cell inner membrane. Required for the insertion and/or proper folding and/or complex formation of integral membrane proteins into the membrane. Involved in integration of membrane proteins that insert both dependently and independently of the Sec translocase complex, as well as at least some lipoproteins. Aids folding of multispanning membrane proteins. The sequence is that of Membrane protein insertase YidC from Salmonella newport (strain SL254).